Reading from the N-terminus, the 229-residue chain is Adenine nucleotide translocase lysine N-methyltransferase (229 aa).

The tract at residues 1–22 is N-terminal sequence (NTS); sequence MDQDDPAEALTELREKRLGLLE. A helical membrane pass occupies residues 20–42; sequence LLEIVQAAAGSGLAVYTIWALLL. The tract at residues 43–77 is methyltransferase (MTase); that stretch reads QPGFRRVPLRLQVPYVGASARQVENVLSLLRGRPG. The pre-methyltransferase (preMT) stretch occupies residues 43 to 77; that stretch reads QPGFRRVPLRLQVPYVGASARQVENVLSLLRGRPG.

This sequence belongs to the ANT/ATPSC lysine N-methyltransferase family.

The protein resides in the mitochondrion membrane. It catalyses the reaction L-lysyl-[protein] + 3 S-adenosyl-L-methionine = N(6),N(6),N(6)-trimethyl-L-lysyl-[protein] + 3 S-adenosyl-L-homocysteine + 3 H(+). Its function is as follows. Mitochondrial protein-lysine N-methyltransferase that trimethylates adenine nucleotide translocases ANT2/SLC25A5 and ANT3/SLC25A6, thereby regulating mitochondrial respiration. Probably also trimethylates ANT1/SLC25A4. This is Adenine nucleotide translocase lysine N-methyltransferase from Mus musculus (Mouse).